The sequence spans 257 residues: Imidazole glycerol phosphate synthase subunit HisF (257 aa).

Catalysis depends on residues Asp12 and Asp131.

The protein belongs to the HisA/HisF family. In terms of assembly, heterodimer of HisH and HisF.

It is found in the cytoplasm. The enzyme catalyses 5-[(5-phospho-1-deoxy-D-ribulos-1-ylimino)methylamino]-1-(5-phospho-beta-D-ribosyl)imidazole-4-carboxamide + L-glutamine = D-erythro-1-(imidazol-4-yl)glycerol 3-phosphate + 5-amino-1-(5-phospho-beta-D-ribosyl)imidazole-4-carboxamide + L-glutamate + H(+). The protein operates within amino-acid biosynthesis; L-histidine biosynthesis; L-histidine from 5-phospho-alpha-D-ribose 1-diphosphate: step 5/9. IGPS catalyzes the conversion of PRFAR and glutamine to IGP, AICAR and glutamate. The HisF subunit catalyzes the cyclization activity that produces IGP and AICAR from PRFAR using the ammonia provided by the HisH subunit. The chain is Imidazole glycerol phosphate synthase subunit HisF from Burkholderia thailandensis (strain ATCC 700388 / DSM 13276 / CCUG 48851 / CIP 106301 / E264).